The following is a 231-amino-acid chain: UPF0702 transmembrane protein YetF (231 aa).

3 helical membrane passes run 5–25 (LSVA…LKLL), 33–53 (ITPF…NAVY), and 59–79 (IKEI…IEFI).

This sequence belongs to the UPF0702 family.

It is found in the cell membrane. This Bacillus subtilis (strain 168) protein is UPF0702 transmembrane protein YetF (yetF).